A 387-amino-acid chain; its full sequence is (S)-8-oxocitronellyl enol synthase (387 aa).

NADP(+) is bound by residues 36–38, 64–65, 82–83, 106–107, and Q140; these read TGI, RR, DI, and SW. Residues K144 and Y177 contribute to the active site. Substrate-binding residues include K144 and Y177. NADP(+) is bound by residues Y177 and 211–213; that span reads SMM.

It belongs to the short-chain dehydrogenases/reductases (SDR) family. Highly divergent. Expressed in leaves.

It carries out the reaction (S)-8-oxocitronellyl enol + NADP(+) = (6E)-8-oxogeranial + NADPH + H(+). It catalyses the reaction (S)-8-oxocitronellyl enol + NAD(+) = (6E)-8-oxogeranial + NADH + H(+). The enzyme catalyses (R)-8-oxocitronellyl enol + NADP(+) = (6E)-8-oxogeranial + NADPH + H(+). Its function is as follows. Iridoid synthase that catalyzes the first step in generation of the iridoid ring scaffold using the linear monoterpene (6E)-8-oxogeranial as substrate. Reduces 8-oxogeranial, generating an unstable product that is subsequently cyclized into several possible products, either non-enzymically or by dedicated cyclases. Iridoids comprise a large family of distinctive bicyclic monoterpenes that possess a wide range of pharmacological activities, including anticancer, anti-inflammatory, antifungal and antibacterial activities. In Antirrhinum majus (Garden snapdragon), this protein is (S)-8-oxocitronellyl enol synthase.